A 344-amino-acid polypeptide reads, in one-letter code: Microcin C7 self-immunity protein MccF (344 aa).

The protein belongs to the peptidase S66 family.

In terms of biological role, involved in specific self-immunity to microcin C7. This is Microcin C7 self-immunity protein MccF (mccF) from Escherichia coli.